Here is a 386-residue protein sequence, read N- to C-terminus: Succinate--CoA ligase [ADP-forming] subunit beta (386 aa).

The ATP-grasp domain maps to 9–244 (KEIFRKYGVP…LAEEEPREIQ (236 aa)). Residues lysine 46, 53 to 55 (GRG), glutamate 99, leucine 102, and glutamate 107 contribute to the ATP site. The Mg(2+) site is built by asparagine 199 and aspartate 213. Residues asparagine 264 and 321–323 (GIM) each bind substrate.

It belongs to the succinate/malate CoA ligase beta subunit family. Heterotetramer of two alpha and two beta subunits. Mg(2+) is required as a cofactor.

It carries out the reaction succinate + ATP + CoA = succinyl-CoA + ADP + phosphate. The enzyme catalyses GTP + succinate + CoA = succinyl-CoA + GDP + phosphate. It functions in the pathway carbohydrate metabolism; tricarboxylic acid cycle; succinate from succinyl-CoA (ligase route): step 1/1. In terms of biological role, succinyl-CoA synthetase functions in the citric acid cycle (TCA), coupling the hydrolysis of succinyl-CoA to the synthesis of either ATP or GTP and thus represents the only step of substrate-level phosphorylation in the TCA. The beta subunit provides nucleotide specificity of the enzyme and binds the substrate succinate, while the binding sites for coenzyme A and phosphate are found in the alpha subunit. This chain is Succinate--CoA ligase [ADP-forming] subunit beta, found in Myxococcus xanthus (strain DK1622).